The chain runs to 175 residues: Replication restart protein PriC (175 aa).

This sequence belongs to the PriC family. Monomer. Oligomerizes in the absence of DNA. Component of the replication restart primosome, which is composed of PriA, PriB, PriC, DnaB and DnaT; DnaG primase associates transiently with this complex. Interacts with the C-terminus of SSB; this interaction is required for DnaB loading onto substrate replication forks. Interacts with DnaB alone and in the DnaB-DnaC complex, probably 1:1 binding with DnaB.

Functionally, involved in the restart of stalled replication forks, which reloads the replicative helicase (DnaB) on sites other than the origin of replication. Recognizes abandoned replication forks and remodels DNA single-stranded binding protein (SSB) on ssDNA to uncover a loading site for DnaB. There are several restart pathways, the PriA-PriC pathway is a minor restart pathway. Also part of the minor PriC-Rep pathway for restart of stalled replication forks, which has a different substrate specificity than PriA. priB and priC have redundant roles in the cell. Stimulates the 3'-5' helicase activity of Rep helicase in vitro. In vitro can load the DnaB replicative helicase from a DnaB-DnaC complex on an SSB-coated stalled replication fork with no leading- or lagging-strand (or with a gap between the leading strand and fork junction) in the absence of other primosome proteins (PriA, PriB or DnaT). Also part of the major restart pathway with PriA, PriB, DnaB, DnaT and DnaG primase. PriC may contribute to the stability of the preprimosome complex. Preferentially binds approximately 7-9 nucleotides of single-stranded (ss)DNA, also binds double-stranded (ds)DNA. PriB is probably more important in the cell than PriC. The sequence is that of Replication restart protein PriC from Escherichia coli (strain K12).